The sequence spans 436 residues: T-box transcription factor TBX6 (436 aa).

Residues 100–273 (LWKEFSAVGT…ANPFAKGFRE (174 aa)) constitute a DNA-binding region (T-box). Basic and acidic residues predominate over residues 274–284 (NGRNCKRERDA). Disordered stretches follow at residues 274–344 (NGRN…CGGP) and 360–383 (PSHLPARTPSFAEAPDPGRPAPYS). A compositionally biased stretch (low complexity) spans 332 to 344 (EAASASAPPCGGP).

It localises to the nucleus. In terms of biological role, T-box transcription factor that plays an essential role in the determination of the fate of axial stem cells: neural vs mesodermal. Acts in part by down-regulating, a specific enhancer (N1) of SOX2, to inhibit neural development. Seems to play also an essential role in left/right axis determination and acts through effects on Notch signaling around the node as well as through an effect on the morphology and motility of the nodal cilia. This is T-box transcription factor TBX6 (Tbx6) from Mus musculus (Mouse).